We begin with the raw amino-acid sequence, 297 residues long: Ribosomal RNA small subunit methyltransferase H (297 aa).

S-adenosyl-L-methionine-binding positions include 37 to 39 (GGH), Glu-56, Phe-87, Asp-102, and His-109.

This sequence belongs to the methyltransferase superfamily. RsmH family.

Its subcellular location is the cytoplasm. It catalyses the reaction cytidine(1402) in 16S rRNA + S-adenosyl-L-methionine = N(4)-methylcytidine(1402) in 16S rRNA + S-adenosyl-L-homocysteine + H(+). Functionally, specifically methylates the N4 position of cytidine in position 1402 (C1402) of 16S rRNA. The chain is Ribosomal RNA small subunit methyltransferase H from Borrelia duttonii (strain Ly).